We begin with the raw amino-acid sequence, 75 residues long: Scuwaprin-a (75 aa).

The N-terminal stretch at 1-24 is a signal peptide; the sequence is MSSGGLLLLLGLLTLWAELTPVSG. The 46-residue stretch at 27–72 folds into the WAP domain; it reads RPKKPGLCPPRPQKPPCVKECKNDWSCPGQQKCCSYGCIDECRDPI. Disulfide bonds link Cys34–Cys60, Cys43–Cys64, Cys47–Cys59, and Cys53–Cys68.

This sequence belongs to the venom waprin family. As to expression, expressed by the venom gland.

The protein localises to the secreted. In terms of biological role, damages membranes of susceptible bacteria. Has no hemolytic activity. Not toxic to mice. Does not inhibit the proteinases elastase and cathepsin G. The chain is Scuwaprin-a from Oxyuranus scutellatus scutellatus (Australian taipan).